We begin with the raw amino-acid sequence, 493 residues long: Transcript termination protein A18 (493 aa).

Residues 100-256 form the Helicase ATP-binding domain; that stretch reads MIESKRPLYI…NSIINIAKLS (157 aa). 113 to 120 provides a ligand contact to ATP; it reads LACGFGKT. Residues 206-209 carry the DESH box motif; it reads DESH.

It belongs to the helicase family. Poxviruses subfamily. In terms of assembly, interacts with G2. Might be part of a transcription complex composed at least of G2, A18, and H5.

The protein resides in the virion. In terms of biological role, DNA helicase which seems to act as a postreplicative transcription termination factor. Involved in ATP-dependent release of nascent RNA. Forms a stable complex with single-stranded DNA, and to a lesser extent RNA. The protein is Transcript termination protein A18 of Rabbitpox virus (strain Utrecht) (RPV).